We begin with the raw amino-acid sequence, 905 residues long: Transcriptional regulator MNL1 (905 aa).

Residues 1-29 (MDSHNNIDQSVSELLSDPASVQQSYNSQL) show a composition bias toward polar residues. 8 disordered regions span residues 1 to 34 (MDSH…GPEF), 312 to 340 (QTQA…ASHT), 383 to 419 (MDQV…NARY), 434 to 460 (SEKN…NLLS), 525 to 544 (TKEE…KPKR), 584 to 613 (NISS…SESS), 625 to 671 (NVGK…GTVE), and 685 to 733 (PASE…TSST). Positions 312–334 (QTQAQAQAHQQQQQQSQQQHSPQ) are enriched in low complexity. A compositionally biased stretch (low complexity) spans 439–460 (NHNNRSPPTPPTSTSSPQNLLS). The span at 584–598 (NISSHHSSGTPSITT) shows a compositional bias: polar residues. Residues 628–639 (KRKNKSYRKPKG) show a composition bias toward basic residues. Composition is skewed to low complexity over residues 647 to 669 (QQQQ…STGT) and 690 to 710 (SSLL…EASS). 2 C2H2-type zinc fingers span residues 832–855 (YLCN…RSLH) and 861–883 (YNCD…LKIH). A disordered region spans residues 885–905 (QEDEKDCADAETGVGMDDASG).

It localises to the nucleus. Transcription factor that activates stress response genes via SLE (STRE-like) elements. Required for adaptation to weak acid stress such as acetic acid stress, but seems not involved in the response to heat, osmotic, ethanol, nutrient, oxidative, or heavy-metal stress. Activates a subset of the genes that are repressed by NRG1. In Candida albicans (strain SC5314 / ATCC MYA-2876) (Yeast), this protein is Transcriptional regulator MNL1 (MNL1).